Here is an 85-residue protein sequence, read N- to C-terminus: Putative membrane protein insertion efficiency factor (85 aa).

This sequence belongs to the UPF0161 family.

The protein resides in the cell inner membrane. Its function is as follows. Could be involved in insertion of integral membrane proteins into the membrane. The protein is Putative membrane protein insertion efficiency factor of Fervidobacterium nodosum (strain ATCC 35602 / DSM 5306 / Rt17-B1).